The sequence spans 229 residues: Transmembrane 4 L6 family member 20 (229 aa).

Over 1–14 (MTCCEGWTSCNGFS) the chain is Lumenal. A helical transmembrane segment spans residues 15-35 (LLVLLLLGVVLNAIPLIVSLV). Topologically, residues 36–44 (EEDQFSQNP) are cytoplasmic. A helical transmembrane segment spans residues 45–65 (ISCFEWWFPGIIGAGLMAIPA). Topologically, residues 66 to 83 (TTMSLTARKRACCNNRTG) are lumenal. The helical transmembrane segment at 84–104 (MFLSSLFSVITVIGALYCMLI) threads the bilayer. Residues 105 to 185 (SIQALLKGPL…HFDSEENKHR (81 aa)) are Cytoplasmic-facing. A helical transmembrane segment spans residues 186 to 206 (LIHFSVFLGLLLVGILEVLFG). Over 207–229 (LSQIVIGFLGCLCGVSKRRSQIV) the chain is Lumenal.

Belongs to the L6 tetraspanin family. Glycosylated at Asn-132, Asn-148 and Asn-163 in presence of ceramide which inverts the orientation of TM4SF20 in membranes exposing these residues to the endoplasmic reticulum lumen. Post-translationally, cleaved by signal peptidase at Ser-14 but the peptide does not act as a signal peptide. Cleavage is inhibited by ceramide which inverts the orientation of TM4SF20 in membranes exposing the N-terminus to the cytosol and not to the endoplasmic reticulum lumen. In terms of tissue distribution, expressed in the brain, with high levels in the parietal lobe, hippocampus, pons, white matter and cerebellum.

It localises to the membrane. The protein localises to the endoplasmic reticulum membrane. Polytopic transmembrane protein that inhibits regulated intramembrane proteolysis (RIP) of CREB3L1, inhibiting its activation and the induction of collagen synthesis. In response to ceramide, which alters TM4SF20 membrane topology, stimulates RIP activation of CREB3L1. Ceramide reverses the direction through which transmembrane helices are translocated into the endoplasmic reticulum membrane during translation of TM4SF20, this mechanism is called 'regulated alternative translocation' (RAT) and regulates the function of the transmembrane protein. The chain is Transmembrane 4 L6 family member 20 (TM4SF20) from Homo sapiens (Human).